A 419-amino-acid chain; its full sequence is L-rhamnose isomerase (419 aa).

Mn(2+) contacts are provided by His262, Asp294, and Asp296.

It belongs to the rhamnose isomerase family. As to quaternary structure, homotetramer. Mn(2+) serves as cofactor.

The protein resides in the cytoplasm. The catalysed reaction is L-rhamnopyranose = L-rhamnulose. It participates in carbohydrate degradation; L-rhamnose degradation; glycerone phosphate from L-rhamnose: step 1/3. In terms of biological role, catalyzes the interconversion of L-rhamnose and L-rhamnulose. This chain is L-rhamnose isomerase, found in Escherichia coli O6:H1 (strain CFT073 / ATCC 700928 / UPEC).